Reading from the N-terminus, the 1698-residue chain is Bromodomain adjacent to zinc finger domain protein 2A (1698 aa).

Disordered stretches follow at residues 240-262 (QSTP…QLPS) and 352-387 (VMQE…MTIE). Over residues 377 to 387 (ENVSQDEMTIE) the composition is skewed to polar residues. The MBD domain maps to 418-489 (IATPEQVCFP…EHFSFSPRMP (72 aa)). 2 disordered regions span residues 524–550 (RGRP…PPKV) and 610–653 (EKEE…DRKL). The span at 528 to 540 (RNLEKAKAKEQKA) shows a compositional bias: basic and acidic residues. The a.T hook 1 DNA-binding region spans 541–553 (KRGRGRPPKVKMI). Residues 579 to 638 (VQLCKLKKKMRRKARNQEAKLEAAKKLKEIKEKEEKKQKIQKAKNQEKAKNQEKKRTRRQ) are a coiled coil. Residues 610–632 (EKEEKKQKIQKAKNQEKAKNQEK) are compositionally biased toward basic and acidic residues. The region spanning 701 to 766 (SCAFSDCLTT…LQAAMINPGL (66 aa)) is the DDT domain. Disordered stretches follow at residues 884 to 905 (ITTT…NDEL), 1013 to 1063 (SFGS…PLTN), 1088 to 1110 (TVLT…SEAT), and 1123 to 1149 (TPCR…TAAT). Residues 890–900 (SLRRRSERNAE) are compositionally biased toward basic and acidic residues. 2 stretches are compositionally biased toward polar residues: residues 1023–1040 (HPRN…SCHC) and 1051–1063 (VTDQ…PLTN). Residues 1091 to 1108 (TPESSPPHSESTPIISSE) show a composition bias toward low complexity. The span at 1124 to 1149 (PCRNHNQGLSTHSSNRLSPPSPTAAT) shows a compositional bias: polar residues. The a.T hook 3 DNA-binding region spans 1204–1216 (EKRRGRRPSKLLK). The PHD-type zinc-finger motif lies at 1476 to 1526 (KVTCLYCRKGDNDELLLLCDSCDRGCHTYCHRPRMNEIPEGDWFCPTCISL). The tract at residues 1549-1587 (FTEDSPSKPSRRREHPTASQFSPGESPASKKRRMGTRSQ) is disordered. The region spanning 1585–1689 (RSQSPDLTFC…KFYDARWEEF (105 aa)) is the Bromo domain.

The protein belongs to the WAL family. As to quaternary structure, component of the NoRC complex, at least composed of SMARCA5/SNF2H and BAZ2A/TIP5.

It localises to the nucleus. The protein localises to the nucleolus. In terms of biological role, essential component of the NoRC (nucleolar remodeling complex) complex, a complex that mediates silencing of a fraction of rDNA by recruiting histone-modifying enzymes and DNA methyltransferases, leading to heterochromatin formation and transcriptional silencing. In the complex, it plays a central role by being recruited to rDNA and by targeting chromatin modifying enzymes such as HDAC1, leading to repress RNA polymerase I transcription. Recruited to rDNA via its interaction with TTF1 and its ability to recognize and bind histone H4 acetylated on 'Lys-16' (H4K16ac), leading to deacetylation of H4K5ac, H4K8ac, H4K12ac but not H4K16ac. Specifically binds pRNAs, 150-250 nucleotide RNAs that are complementary in sequence to the rDNA promoter; pRNA-binding is required for heterochromatin formation and rDNA silencing. The chain is Bromodomain adjacent to zinc finger domain protein 2A (baz2a) from Xenopus laevis (African clawed frog).